A 93-amino-acid chain; its full sequence is Large ribosomal subunit protein uL23 (93 aa).

This sequence belongs to the universal ribosomal protein uL23 family. In terms of assembly, part of the 50S ribosomal subunit. Contacts protein L29, and trigger factor when it is bound to the ribosome.

Functionally, one of the early assembly proteins it binds 23S rRNA. One of the proteins that surrounds the polypeptide exit tunnel on the outside of the ribosome. Forms the main docking site for trigger factor binding to the ribosome. This is Large ribosomal subunit protein uL23 from Campylobacter fetus subsp. fetus (strain 82-40).